The sequence spans 161 residues: Phosphopantetheine adenylyltransferase (161 aa).

Ser-8 lines the substrate pocket. ATP contacts are provided by residues 8-9 (SF) and His-16. Substrate-binding residues include Lys-40, Thr-72, and Arg-86. ATP contacts are provided by residues 87–89 (GLR), Glu-97, and 122–128 (HSFLSSS).

Belongs to the bacterial CoaD family. As to quaternary structure, homohexamer. The cofactor is Mg(2+).

The protein localises to the cytoplasm. It carries out the reaction (R)-4'-phosphopantetheine + ATP + H(+) = 3'-dephospho-CoA + diphosphate. It functions in the pathway cofactor biosynthesis; coenzyme A biosynthesis; CoA from (R)-pantothenate: step 4/5. Its function is as follows. Reversibly transfers an adenylyl group from ATP to 4'-phosphopantetheine, yielding dephospho-CoA (dPCoA) and pyrophosphate. The protein is Phosphopantetheine adenylyltransferase of Gloeobacter violaceus (strain ATCC 29082 / PCC 7421).